Consider the following 166-residue polypeptide: Interferon gamma (166 aa).

Positions 1–23 (MKYTSYFLALLLCGLLGFSGSYG) are cleaved as a signal peptide. The residue at position 24 (glutamine 24) is a Pyrrolidone carboxylic acid. Residues asparagine 39 and asparagine 106 are each glycosylated (N-linked (GlcNAc...) asparagine).

It belongs to the type II (or gamma) interferon family. In terms of assembly, homodimer. Interacts with IFNGR1 (via extracellular domain); this interaction promotes IFNGR1 dimerization. In terms of tissue distribution, released primarily from activated T lymphocytes.

The protein localises to the secreted. Type II interferon produced by immune cells such as T-cells and NK cells that plays crucial roles in antimicrobial, antiviral, and antitumor responses by activating effector immune cells and enhancing antigen presentation. Primarily signals through the JAK-STAT pathway after interaction with its receptor IFNGR1 to affect gene regulation. Upon IFNG binding, IFNGR1 intracellular domain opens out to allow association of downstream signaling components JAK2, JAK1 and STAT1, leading to STAT1 activation, nuclear translocation and transcription of IFNG-regulated genes. Many of the induced genes are transcription factors such as IRF1 that are able to further drive regulation of a next wave of transcription. Plays a role in class I antigen presentation pathway by inducing a replacement of catalytic proteasome subunits with immunoproteasome subunits. In turn, increases the quantity, quality, and repertoire of peptides for class I MHC loading. Increases the efficiency of peptide generation also by inducing the expression of activator PA28 that associates with the proteasome and alters its proteolytic cleavage preference. Up-regulates as well MHC II complexes on the cell surface by promoting expression of several key molecules such as cathepsins B/CTSB, H/CTSH, and L/CTSL. Participates in the regulation of hematopoietic stem cells during development and under homeostatic conditions by affecting their development, quiescence, and differentiation. The chain is Interferon gamma (IFNG) from Bos taurus (Bovine).